We begin with the raw amino-acid sequence, 301 residues long: tRNA pseudouridine synthase B (301 aa).

Aspartate 45 serves as the catalytic Nucleophile.

It belongs to the pseudouridine synthase TruB family. Type 1 subfamily.

The catalysed reaction is uridine(55) in tRNA = pseudouridine(55) in tRNA. Its function is as follows. Responsible for synthesis of pseudouridine from uracil-55 in the psi GC loop of transfer RNAs. The chain is tRNA pseudouridine synthase B from Streptomyces coelicolor (strain ATCC BAA-471 / A3(2) / M145).